A 273-amino-acid chain; its full sequence is NLP effector protein 10 (273 aa).

Residues 1–21 form the signal peptide; it reads MKLPTFLIGFVALLVTSNGSA. Asn91 is a glycosylation site (N-linked (GlcNAc...) asparagine). The short motif at 129-139 is the Conserved undecapeptide motif element; sequence AIMYAWYLPRA. The Conserved heptapeptide motif signature appears at 149–155; sequence GHRHYWL.

Belongs to the Necrosis inducing protein (NPP1) family.

Its subcellular location is the secreted. Secreted effector that acts as a pathogen-associated molecular pattern (PAMP) recognized by the plant immune system. Seems not to induce necrosis in Nicotiana benthamiana leaves but significantly improves disease resistance of Arabidopsis thaliana to Hyaloperonospora arabidopsidis and causes an inhibition of plant growth which is typically associated with enhanced immunity when over-expressed in Arabidopsis. This chain is NLP effector protein 10, found in Plasmopara viticola (Downy mildew of grapevine).